Reading from the N-terminus, the 68-residue chain is C-hordein (68 aa).

Pro residues-rich tracts occupy residues 1–24 (YPQQPQPFPQQPIPQQPQPYPQQP) and 33–55 (PQQPQPYPQQPQPFPQQPIPLQP). Positions 1–68 (YPQQPQPFPQ…YTQQTIWSMV (68 aa)) are disordered. Positions 59–68 (YTQQTIWSMV) are enriched in polar residues.

In terms of tissue distribution, developing endosperm.

Functionally, sulfur-poor seed storage protein. This chain is C-hordein, found in Hordeum vulgare (Barley).